Here is a 419-residue protein sequence, read N- to C-terminus: Inositol-tetrakisphosphate 1-kinase (419 aa).

Lysine 18 contributes to the 1D-myo-inositol 1,3,4-trisphosphate binding site. 2 residues coordinate ATP: arginine 106 and lysine 157. The 209-residue stretch at 117 to 325 (EAYMKDDRIC…IASVLQGQSS (209 aa)) folds into the ATP-grasp domain. 1D-myo-inositol 1,3,4-trisphosphate contacts are provided by histidine 167 and lysine 199. Residues 188–199 (QNFINHNAVLYK), serine 214, serine 232, and serine 236 contribute to the ATP site. 3 residues coordinate Mg(2+): aspartate 281, aspartate 295, and asparagine 297. Position 297 (asparagine 297) interacts with 1D-myo-inositol 1,3,4-trisphosphate. Lysine 388 is modified (N6-acetyllysine; by EP300 and CREBBP). Serine 401 is modified (phosphoserine). The residue at position 415 (lysine 415) is an N6-acetyllysine; by EP300 and CREBBP.

This sequence belongs to the ITPK1 family. As to quaternary structure, monomer. Interacts with GPS1/COPS1. Mg(2+) is required as a cofactor. Post-translationally, acetylation by EP300 and CREBBP destabilizes ITPK1, and down-regulates enzymatic activity. Deacetylated by SIRT1.

It carries out the reaction 1D-myo-inositol 3,4,5,6-tetrakisphosphate + ATP = 1D-myo-inositol 1,3,4,5,6-pentakisphosphate + ADP + H(+). It catalyses the reaction 1D-myo-inositol 1,3,4-trisphosphate + ATP = 1D-myo-inositol 1,3,4,5-tetrakisphosphate + ADP + H(+). The enzyme catalyses 1D-myo-inositol 1,3,4-trisphosphate + ATP = 1D-myo-inositol 1,3,4,6-tetrakisphosphate + ADP + H(+). The catalysed reaction is 1D-myo-inositol 3,4,6-trisphosphate + ATP = 1D-myo-inositol 1,3,4,6-tetrakisphosphate + ADP + H(+). It carries out the reaction 1D-myo-inositol 1,3,4-trisphosphate + 1D-myo-inositol 1,3,4,5,6-pentakisphosphate = 1D-myo-inositol 3,4,5,6-tetrakisphosphate + 1D-myo-inositol 1,3,4,6-tetrakisphosphate. It catalyses the reaction 1D-myo-inositol 1,3,4-trisphosphate + 1D-myo-inositol 1,3,4,5,6-pentakisphosphate = 1D-myo-inositol 3,4,5,6-tetrakisphosphate + 1D-myo-inositol 1,3,4,5-tetrakisphosphate. Kinase that can phosphorylate various inositol polyphosphate such as Ins(3,4,5,6)P4 or Ins(1,3,4)P3. Phosphorylates Ins(3,4,5,6)P4 at position 1 to form Ins(1,3,4,5,6)P5. This reaction is thought to have regulatory importance, since Ins(3,4,5,6)P4 is an inhibitor of plasma membrane Ca(2+)-activated Cl(-) channels, while Ins(1,3,4,5,6)P5 is not. Also phosphorylates Ins(1,3,4)P3 on O-5 and O-6 to form Ins(1,3,4,6)P4, an essential molecule in the hexakisphosphate (InsP6) pathway. Also acts as an inositol polyphosphate phosphatase that dephosphorylates Ins(1,3,4,5)P4 and Ins(1,3,4,6)P4 to Ins(1,3,4)P3, and Ins(1,3,4,5,6)P5 to Ins(3,4,5,6)P4. May also act as an isomerase that interconverts the inositol tetrakisphosphate isomers Ins(1,3,4,5)P4 and Ins(1,3,4,6)P4 in the presence of ADP and magnesium. Probably acts as the rate-limiting enzyme of the InsP6 pathway. Modifies TNF-alpha-induced apoptosis by interfering with the activation of TNFRSF1A-associated death domain. Plays an important role in MLKL-mediated necroptosis. Produces highly phosphorylated inositol phosphates such as inositolhexakisphosphate (InsP6) which bind to MLKL mediating the release of an N-terminal auto-inhibitory region leading to its activation. Essential for activated phospho-MLKL to oligomerize and localize to the cell membrane during necroptosis. The polypeptide is Inositol-tetrakisphosphate 1-kinase (ITPK1) (Bos taurus (Bovine)).